The sequence spans 505 residues: Deoxyguanosinetriphosphate triphosphohydrolase (505 aa).

The HD domain maps to 66 to 273 (RLTHSMEVQQ…MEAADDISYC (208 aa)).

It belongs to the dGTPase family. Type 1 subfamily. Homotetramer. It depends on Mg(2+) as a cofactor.

It catalyses the reaction dGTP + H2O = 2'-deoxyguanosine + triphosphate + H(+). Its function is as follows. dGTPase preferentially hydrolyzes dGTP over the other canonical NTPs. The sequence is that of Deoxyguanosinetriphosphate triphosphohydrolase from Salmonella choleraesuis (strain SC-B67).